A 720-amino-acid chain; its full sequence is Calpain-12 (720 aa).

The 297-residue stretch at 45–341 (LFRDPCFPAG…FNTVQICSLS (297 aa)) folds into the Calpain catalytic domain. Active-site residues include cysteine 105, histidine 259, and asparagine 283. Residues 342-541 (PEVLGPSPAG…DDVISADLDA (200 aa)) form a domain III region. A compositionally biased stretch (acidic residues) spans 393–403 (DEEEDDDDEEG). Positions 393–415 (DEEEDDDDEEGPWGGWGAAGARG) are disordered. The segment at 542 to 720 (LQAPYKPLEL…KQWSEVATFS (179 aa)) is domain IV. One can recognise an EF-hand domain in the interval 621-656 (GHLMSWQATFDKFDEDASGTMNSCELRLALTAAGFH). Aspartate 634, aspartate 636, serine 638, threonine 640, and glutamate 645 together coordinate Ca(2+).

Belongs to the peptidase C2 family. In terms of tissue distribution, expression localized to the cortex of the hair follicle during the anagen phase of hair cycle.

Functionally, calcium-regulated non-lysosomal thiol-protease. In Mus musculus (Mouse), this protein is Calpain-12 (Capn12).